We begin with the raw amino-acid sequence, 451 residues long: Tubulin beta-1 chain (451 aa).

Positions Met1–Ile4 match the MREI motif motif. 6 residues coordinate GTP: Gln11, Glu69, Ser138, Gly142, Thr143, and Gly144. A Mg(2+)-binding site is contributed by Glu69. Residue Ser172 is modified to Phosphoserine; by CDK1. Positions 204 and 226 each coordinate GTP. Residues Leu432 to His451 are disordered. Residues Glu433 to His451 are compositionally biased toward acidic residues. Glu440 bears the 5-glutamyl polyglutamate mark.

It belongs to the tubulin family. As to quaternary structure, dimer of alpha and beta chains. A typical microtubule is a hollow water-filled tube with an outer diameter of 25 nm and an inner diameter of 15 nM. Alpha-beta heterodimers associate head-to-tail to form protofilaments running lengthwise along the microtubule wall with the beta-tubulin subunit facing the microtubule plus end conferring a structural polarity. Microtubules usually have 13 protofilaments but different protofilament numbers can be found in some organisms and specialized cells. Interacts with RANBP10. The cofactor is Mg(2+). In terms of processing, some glutamate residues at the C-terminus are polyglutamylated, resulting in polyglutamate chains on the gamma-carboxyl group. Polyglutamylation plays a key role in microtubule severing by spastin (SPAST). SPAST preferentially recognizes and acts on microtubules decorated with short polyglutamate tails: severing activity by SPAST increases as the number of glutamates per tubulin rises from one to eight, but decreases beyond this glutamylation threshold. Glutamylation is also involved in cilia motility. Post-translationally, some glutamate residues at the C-terminus are monoglycylated but not polyglycylated due to the absence of functional TTLL10 in human. Monoglycylation is mainly limited to tubulin incorporated into cilia and flagella axonemes, which is required for their stability and maintenance. Flagella glycylation controls sperm motility. Both polyglutamylation and monoglycylation can coexist on the same protein on adjacent residues, and lowering glycylation levels increases polyglutamylation, and reciprocally. Phosphorylated on Ser-172 by CDK1 during the cell cycle, from metaphase to telophase, but not in interphase. This phosphorylation inhibits tubulin incorporation into microtubules. Hematopoietic cell-specific. Major isotype in leukocytes, where it represents 50% of all beta-tubulins.

The protein resides in the cytoplasm. Its subcellular location is the cytoskeleton. In terms of biological role, tubulin is the major constituent of microtubules, a cylinder consisting of laterally associated linear protofilaments composed of alpha- and beta-tubulin heterodimers. Microtubules grow by the addition of GTP-tubulin dimers to the microtubule end, where a stabilizing cap forms. Below the cap, tubulin dimers are in GDP-bound state, owing to GTPase activity of alpha-tubulin. This chain is Tubulin beta-1 chain (TUBB1), found in Homo sapiens (Human).